We begin with the raw amino-acid sequence, 520 residues long: Solute carrier family 2, facilitated glucose transporter member 14 (520 aa).

Topologically, residues 1-29 (MEFHNGGHVSGIGGFLVSLTSRMKPHTLA) are cytoplasmic. A helical membrane pass occupies residues 30-50 (VTPALIFAITVATIGSFQFGY). At 51 to 88 (NTGVINAPETIIKEFINKTLTDKANAPPSEVLLTNLWS) the chain is on the extracellular side. N-linked (GlcNAc...) asparagine glycosylation occurs at Asn-67. The helical transmembrane segment at 89–109 (LSVAIFSVGGMIGSFSVGLFV) threads the bilayer. Over 110 to 117 (NRFGRRNS) the chain is Cytoplasmic. A helical transmembrane segment spans residues 118 to 138 (MLIVNLLAATGGCLMGLCKIA). Residues 139-148 (ESVEMLILGR) are Extracellular-facing. The chain crosses the membrane as a helical span at residues 149–169 (LVIGLFCGLCTGFVPMYIGEI). Residues 170 to 177 (SPTALRGA) lie on the Cytoplasmic side of the membrane. The helical transmembrane segment at 178–198 (FGTLNQLGIVIGILVAQIFGL) threads the bilayer. Residue Gln-183 coordinates D-glucose. At 199–207 (ELILGSEEL) the chain is on the extracellular side. The chain crosses the membrane as a helical span at residues 208-228 (WPVLLGFTILPAILQSAALPC). Topologically, residues 229-293 (CPESPRFLLI…LFRVSSYRQP (65 aa)) are cytoplasmic. The chain crosses the membrane as a helical span at residues 294–314 (IIISIVLQLSQQLSGINAVFY). D-glucose is bound by residues 304–305 (QQ) and Asn-310. The Extracellular portion of the chain corresponds to 315-328 (YSTGIFKDAGVQQP). A helical transmembrane segment spans residues 329-349 (IYATISAGVVNTIFTLLSLFL). Asn-339 is a binding site for D-glucose. Residues 350-358 (VERAGRRTL) lie on the Cytoplasmic side of the membrane. A helical membrane pass occupies residues 359-379 (HMIGLGGMAFCSTLMTVSLLL). The Extracellular segment spans residues 380–392 (KNHYNGMSFVCIG). A helical transmembrane segment spans residues 393-413 (AILVFVACFEIGPGPIPWFIV). 2 residues coordinate D-glucose: Glu-402 and Trp-410. The Cytoplasmic segment spans residues 414–423 (AELFSQGPRP). The helical transmembrane segment at 424–444 (AAMAVAGCSNWTSNFLVGLLF) threads the bilayer. Topologically, residues 445–451 (PSAAYYL) are extracellular. The helical transmembrane segment at 452 to 472 (GAYVFIIFTGFLITFLAFTFF) threads the bilayer. Residues 473 to 520 (KVPETRGRTFEDITRAFEGQAHGADRSGKDGVMGMNSIEPAKETTTNV) lie on the Cytoplasmic side of the membrane. The tract at residues 493 to 520 (AHGADRSGKDGVMGMNSIEPAKETTTNV) is disordered.

This sequence belongs to the major facilitator superfamily. Sugar transporter (TC 2.A.1.1) family. Glucose transporter subfamily. Mainly expressed in testis. Also expressed in small intestine, liver and kidney.

Its subcellular location is the cell membrane. It catalyses the reaction D-glucose(out) = D-glucose(in). The enzyme catalyses L-dehydroascorbate(out) = L-dehydroascorbate(in). Its function is as follows. Hexose transporter that can mediate the transport of glucose and dehydroascorbate across the cell membrane. The chain is Solute carrier family 2, facilitated glucose transporter member 14 from Homo sapiens (Human).